The sequence spans 151 residues: 3-dehydroquinate dehydratase (151 aa).

The active-site Proton acceptor is the tyrosine 24. Asparagine 76, histidine 82, and aspartate 89 together coordinate substrate. Residue histidine 102 is the Proton donor of the active site. Substrate is bound by residues 103 to 104 and arginine 113; that span reads VS.

Belongs to the type-II 3-dehydroquinase family. Homododecamer.

It catalyses the reaction 3-dehydroquinate = 3-dehydroshikimate + H2O. It functions in the pathway metabolic intermediate biosynthesis; chorismate biosynthesis; chorismate from D-erythrose 4-phosphate and phosphoenolpyruvate: step 3/7. Catalyzes a trans-dehydration via an enolate intermediate. The sequence is that of 3-dehydroquinate dehydratase from Rhodopseudomonas palustris (strain TIE-1).